The sequence spans 195 residues: NADH-quinone oxidoreductase subunit C (195 aa).

Belongs to the complex I 30 kDa subunit family. As to quaternary structure, NDH-1 is composed of 14 different subunits. Subunits NuoB, C, D, E, F, and G constitute the peripheral sector of the complex.

The protein localises to the cell inner membrane. It catalyses the reaction a quinone + NADH + 5 H(+)(in) = a quinol + NAD(+) + 4 H(+)(out). Functionally, NDH-1 shuttles electrons from NADH, via FMN and iron-sulfur (Fe-S) centers, to quinones in the respiratory chain. The immediate electron acceptor for the enzyme in this species is believed to be ubiquinone. Couples the redox reaction to proton translocation (for every two electrons transferred, four hydrogen ions are translocated across the cytoplasmic membrane), and thus conserves the redox energy in a proton gradient. The polypeptide is NADH-quinone oxidoreductase subunit C (Laribacter hongkongensis (strain HLHK9)).